Reading from the N-terminus, the 496-residue chain is Probable cytosol aminopeptidase (496 aa).

Mn(2+)-binding residues include Lys-266 and Asp-271. Lys-278 is a catalytic residue. Mn(2+)-binding residues include Asp-289, Asp-348, and Glu-350. The active site involves Arg-352.

It belongs to the peptidase M17 family. Mn(2+) is required as a cofactor.

It localises to the cytoplasm. It catalyses the reaction Release of an N-terminal amino acid, Xaa-|-Yaa-, in which Xaa is preferably Leu, but may be other amino acids including Pro although not Arg or Lys, and Yaa may be Pro. Amino acid amides and methyl esters are also readily hydrolyzed, but rates on arylamides are exceedingly low.. The catalysed reaction is Release of an N-terminal amino acid, preferentially leucine, but not glutamic or aspartic acids.. Its function is as follows. Presumably involved in the processing and regular turnover of intracellular proteins. Catalyzes the removal of unsubstituted N-terminal amino acids from various peptides. The chain is Probable cytosol aminopeptidase from Pseudomonas syringae pv. syringae (strain B728a).